A 458-amino-acid polypeptide reads, in one-letter code: Chondroitin hydrolase (458 aa).

The signal sequence occupies residues methionine 1 to glycine 22. The EGF-like domain maps to asparagine 358–glutamate 401. 3 cysteine pairs are disulfide-bonded: cysteine 362/cysteine 373, cysteine 367/cysteine 389, and cysteine 391/cysteine 400.

This sequence belongs to the glycosyl hydrolase 56 family.

Functionally, endo-beta-galactosaminidase that specifically hydrolyzes chondroitin, releasing GlcUA-beta-(1-&gt;3)-GalNAc-beta-(1-&gt;4)-GlcUA-beta-(1-&gt;3)-GalNAc as the main product. Also hydrolyzes to a lesser extent chondroitin sulfates (CS-A, CS-C) and hyaluronic acid. May regulate the function of chondroitin in cell division. This chain is Chondroitin hydrolase, found in Caenorhabditis elegans.